Consider the following 266-residue polypeptide: Ribosomal RNA small subunit methyltransferase A (266 aa).

Positions 11, 13, 37, 57, 85, and 104 each coordinate S-adenosyl-L-methionine.

Belongs to the class I-like SAM-binding methyltransferase superfamily. rRNA adenine N(6)-methyltransferase family. RsmA subfamily.

The protein resides in the cytoplasm. The catalysed reaction is adenosine(1518)/adenosine(1519) in 16S rRNA + 4 S-adenosyl-L-methionine = N(6)-dimethyladenosine(1518)/N(6)-dimethyladenosine(1519) in 16S rRNA + 4 S-adenosyl-L-homocysteine + 4 H(+). Functionally, specifically dimethylates two adjacent adenosines (A1518 and A1519) in the loop of a conserved hairpin near the 3'-end of 16S rRNA in the 30S particle. May play a critical role in biogenesis of 30S subunits. The sequence is that of Ribosomal RNA small subunit methyltransferase A from Campylobacter jejuni (strain RM1221).